A 750-amino-acid polypeptide reads, in one-letter code: MATKIAGGLHRAQEVLQNTSSKSKKLVDLERDTADAHTQQPLTTDHGVRVSNTDQWLRVTNDRRTGPSLLEDQIAREKIHRFDHERIPERVVHARGTGAFGNFKLKESIEDLTYAGVLTDTSRNTPVFVRFSTVQGSRGSADTVRDVRGFAVKFYTDEGNWDIVGNNIPVFFIQDAVKFPDFVHAVKPEPHNEVPQAQTAHNNFWDFVYLHPEATHMFMWAMSDRAIPRSYRMMQGFGVNTFALVNKEGKRHFVKFHWIPHLGVHSLVWDEALKLGGQDPDFHRKDLMEAIDNKAYPKWDFAIQVIPEEKQDDFEFDILDATKIWPEDLVPLRVIGELELNRNVDEFFPQTEQVAFCTSHIVPGIDFTDDPLLQGRNFSYFDTQISRLGINWEELPINRPVCPVLNHNRDGQMRHRITQGTVNYWPNRFEAVPPTGTKGSGVGGGFTTYPQRVEGIKNRALSDKFREHHNQAQLFYNSMSEHEKLHMKKAFSFELDHCDDPTVYERLAGHRLAEIDLELAQKVAEMVGAPIPAKALKQNHGRRAPHLSQTEFIPKNPTIASRRIAIIIGDGYDPVAFTGLKTAIKAASALPFIIGTKRSAIYADGEDKTSSKGIIPDHHYDGQRSTMFDATFIPGGPHVATLRQNGQIKYWISETFGHLKALGATGEAVDLVKETLSGTLDVQVASSQSPEPVEWYGVVTAGGKQKPESFKESVQILKGATDFVGKFFYQISQHRNYQRELDGLASTIAF.

A disordered region spans residues 30-49; that stretch reads ERDTADAHTQQPLTTDHGVR. Residues His93 and Asn166 contribute to the active site. Tyr380 is a heme binding site.

The protein belongs to the catalase family. Requires heme as cofactor.

The protein resides in the peroxisome matrix. It catalyses the reaction 2 H2O2 = O2 + 2 H2O. Its function is as follows. Catalyzes the degradation of hydrogen peroxide (H(2)O(2)) generated by peroxisomal oxidases to water and oxygen, thereby protecting cells from the toxic effects of hydrogen peroxide. In Aspergillus fumigatus (strain ATCC MYA-4609 / CBS 101355 / FGSC A1100 / Af293) (Neosartorya fumigata), this protein is Catalase A (catA).